The sequence spans 284 residues: Protein-S-isoprenylcysteine O-methyltransferase (284 aa).

The Cytoplasmic portion of the chain corresponds to 1 to 16; the sequence is MAGCAARVPPGSEARL. Residues 17–33 form a helical membrane-spanning segment; the sequence is SLATFLLGASVLALPLL. Over 34–41 the chain is Lumenal; it reads TRAGLQGR. Residues 42 to 59 traverse the membrane as a helical segment; it reads TGLALYVAGLNALLLLLY. The Cytoplasmic segment spans residues 60-69; the sequence is RPPRYQIAIR. A helical membrane pass occupies residues 70-87; the sequence is ACFLGFVFGCGVLLSFSQ. At 88–92 the chain is on the lumenal side; it reads SSWNH. The helical transmembrane segment at 93-112 threads the bilayer; that stretch reads FGWYVCSLSLFHYSEYLVTA. The Cytoplasmic segment spans residues 113–131; sequence VNNPKSLSLDSFLLNHSLE. A helical membrane pass occupies residues 132–149; it reads YTVAALSSWIEFTLENIF. Residues 150-154 lie on the Lumenal side of the membrane; that stretch reads WPELK. A helical membrane pass occupies residues 155-174; that stretch reads QITWLSAAGLLMVIFGECLR. Residues 175–212 lie on the Cytoplasmic side of the membrane; that stretch reads KVAMFTAGSNFNHVVQSEKSDTHTLVTSGVYAWCRHPS. S-adenosyl-L-methionine-binding positions include Q190, 197–200, Y205, and 210–213; these read HTLV and HPSY. Residues 213-228 traverse the membrane as a helical segment; the sequence is YVGWFYWSIGTQVMLC. Position 229 (N229) is a topological domain, lumenal. Residues 230 to 244 traverse the membrane as a helical segment; the sequence is PICGVVYALTVWRFF. The Cytoplasmic portion of the chain corresponds to 245–284; sequence RDRTEEEEISLIHFFGEEYLDYKKRVPTGLPFIKGVKVGL. R247 provides a ligand contact to substrate. E251 contributes to the S-adenosyl-L-methionine binding site.

Belongs to the class VI-like SAM-binding methyltransferase superfamily. Isoprenylcysteine carboxyl methyltransferase family.

It localises to the endoplasmic reticulum membrane. The enzyme catalyses [protein]-C-terminal S-[(2E,6E)-farnesyl]-L-cysteine + S-adenosyl-L-methionine = [protein]-C-terminal S-[(2E,6E)-farnesyl]-L-cysteine methyl ester + S-adenosyl-L-homocysteine. In terms of biological role, catalyzes the post-translational methylation of isoprenylated C-terminal cysteine residues. This chain is Protein-S-isoprenylcysteine O-methyltransferase, found in Rattus norvegicus (Rat).